The chain runs to 218 residues: MGETDNAPRGPPSFLPHKMNLLLRGLLLFLIGVFLALVLNLLQVQRNVTLFPPDVLSSLFSSAWWVPLCCGTAAAAIGLLYPCIDRHLGEPHKFKREWSSVMRCVAVFVGINHASAKVDFANNTQLSLTLAALSIGLWWTFDRSRSGLGLGIGISFFATVVSQLLVYNGVYEYTAPDFLYVRSWLPCIFFAGGITMGNIGRQLEMYERLALVEKSHRD.

The Cytoplasmic segment spans residues 1–21; it reads MGETDNAPRGPPSFLPHKMNL. The helical transmembrane segment at 22–44 threads the bilayer; the sequence is LLRGLLLFLIGVFLALVLNLLQV. The Lumenal portion of the chain corresponds to 45–63; sequence QRNVTLFPPDVLSSLFSSA. A helical transmembrane segment spans residues 64–81; sequence WWVPLCCGTAAAAIGLLY. Residues 82 to 96 lie on the Cytoplasmic side of the membrane; sequence PCIDRHLGEPHKFKR. The chain crosses the membrane as a helical span at residues 97–119; the sequence is EWSSVMRCVAVFVGINHASAKVD. At 120 to 122 the chain is on the lumenal side; sequence FAN. A helical transmembrane segment spans residues 123-141; it reads NTQLSLTLAALSIGLWWTF. At 142–146 the chain is on the cytoplasmic side; sequence DRSRS. Residues 147 to 168 traverse the membrane as a helical segment; the sequence is GLGLGIGISFFATVVSQLLVYN. Over 169–182 the chain is Lumenal; the sequence is GVYEYTAPDFLYVR. Residues 183–200 traverse the membrane as a helical segment; sequence SWLPCIFFAGGITMGNIG. The Cytoplasmic segment spans residues 201–218; the sequence is RQLEMYERLALVEKSHRD. A KxHxx motif is present at residues 212 to 218; sequence VEKSHRD.

It belongs to the INSIG family. As to quaternary structure, interacts with scap; interaction is direct and only takes place in the presence of sterols; it prevents interaction between scap and the coat protein complex II (COPII). Associates with the SCAP-SREBP complex; association is mediated via its interaction with scap and only takes place in the presence of sterols.

The protein resides in the endoplasmic reticulum membrane. In terms of biological role, oxysterol-binding protein that mediates feedback control of cholesterol synthesis by controlling both endoplasmic reticulum to Golgi transport of scap and degradation of hmgcr. Acts as a negative regulator of cholesterol biosynthesis by mediating the retention of the SCAP-SREBP complex in the endoplasmic reticulum, thereby blocking the processing of sterol regulatory element-binding proteins (SREBPs). Binds oxysterol, including 22-hydroxycholesterol, 24-hydroxycholesterol, 25-hydroxycholesterol and 27-hydroxycholesterol, regulating interaction with scap and retention of the SCAP-SREBP complex in the endoplasmic reticulum. In presence of oxysterol, interacts with scap, retaining the SCAP-SREBP complex in the endoplasmic reticulum, thereby preventing scap from escorting SREBPs to the Golgi. Sterol deprivation reduce oxysterol-binding, disrupting the interaction between insig2 and scap, thereby promoting Golgi transport of the SCAP-SREBP complex, followed by processing and nuclear translocation of SREBPs. Also regulates cholesterol synthesis by regulating degradation of hmgcr. The protein is Insulin-induced gene 2 protein of Xenopus tropicalis (Western clawed frog).